The following is a 266-amino-acid chain: 22 kDa alpha-zein 8 (266 aa).

Residues 1 to 21 (MATKILALLALLALFVSATNA) form the signal peptide.

Belongs to the zein family.

In terms of biological role, zeins are major seed storage proteins. The sequence is that of 22 kDa alpha-zein 8 from Zea mays (Maize).